The chain runs to 600 residues: NADH-quinone oxidoreductase subunit C/D (600 aa).

Residues 1-190 (MIDLMPKKNT…EPFFLNEQKE (190 aa)) are NADH dehydrogenase I subunit C. An NADH dehydrogenase I subunit D region spans residues 214–600 (EFMFLNLGPN…IDFVMSDVDR (387 aa)).

The protein in the N-terminal section; belongs to the complex I 30 kDa subunit family. It in the C-terminal section; belongs to the complex I 49 kDa subunit family. As to quaternary structure, NDH-1 is composed of 13 different subunits. Subunits NuoB, CD, E, F, and G constitute the peripheral sector of the complex.

Its subcellular location is the cell membrane. It carries out the reaction a quinone + NADH + 5 H(+)(in) = a quinol + NAD(+) + 4 H(+)(out). In terms of biological role, NDH-1 shuttles electrons from NADH, via FMN and iron-sulfur (Fe-S) centers, to quinones in the respiratory chain. The immediate electron acceptor for the enzyme in this species is believed to be ubiquinone. Couples the redox reaction to proton translocation (for every two electrons transferred, four hydrogen ions are translocated across the cytoplasmic membrane), and thus conserves the redox energy in a proton gradient. This chain is NADH-quinone oxidoreductase subunit C/D, found in Buchnera aphidicola subsp. Acyrthosiphon pisum (strain Tuc7).